A 219-amino-acid chain; its full sequence is Cytidylate kinase (219 aa).

10 to 18 (GPAAAGKST) provides a ligand contact to ATP.

This sequence belongs to the cytidylate kinase family. Type 1 subfamily.

The protein localises to the cytoplasm. It carries out the reaction CMP + ATP = CDP + ADP. It catalyses the reaction dCMP + ATP = dCDP + ADP. The protein is Cytidylate kinase of Staphylococcus aureus (strain JH9).